Here is a 119-residue protein sequence, read N- to C-terminus: C-C motif chemokine 24 (119 aa).

The signal sequence occupies residues 1–26 (MAGLATFVVSLLLVTLCAHCIDPAGS). Intrachain disulfides connect Cys-33/Cys-58 and Cys-34/Cys-74. 2 N-linked (GlcNAc...) asparagine glycosylation sites follow: Asn-54 and Asn-115.

This sequence belongs to the intercrine beta (chemokine CC) family.

Its subcellular location is the secreted. In terms of biological role, chemotactic for resting T-lymphocytes, and eosinophils. Has lower chemotactic activity for neutrophils but none for monocytes and activated lymphocytes. Is a strong suppressor of colony formation by a multipotential hematopoietic progenitor cell line. Binds to CCR3. The chain is C-C motif chemokine 24 from Canis lupus familiaris (Dog).